A 204-amino-acid chain; its full sequence is Superoxide dismutase [Mn] (204 aa).

Histidine 27 contributes to the Mn(2+) binding site. A phosphothreonine mark is found at threonine 34 and threonine 70. The Mn(2+) site is built by histidine 82, aspartate 164, and histidine 168.

It belongs to the iron/manganese superoxide dismutase family. Homodimer. It depends on Mn(2+) as a cofactor.

The enzyme catalyses 2 superoxide + 2 H(+) = H2O2 + O2. Its function is as follows. Destroys superoxide anion radicals which are normally produced within the cells and which are toxic to biological systems. This chain is Superoxide dismutase [Mn] (sodA), found in Geobacillus stearothermophilus (Bacillus stearothermophilus).